Reading from the N-terminus, the 154-residue chain is Large ribosomal subunit protein uL13 (154 aa).

Positions 132 to 154 (PHEAQQPEVLDVKSMNAKNTRSA) are disordered.

This sequence belongs to the universal ribosomal protein uL13 family. As to quaternary structure, part of the 50S ribosomal subunit.

This protein is one of the early assembly proteins of the 50S ribosomal subunit, although it is not seen to bind rRNA by itself. It is important during the early stages of 50S assembly. The chain is Large ribosomal subunit protein uL13 from Paracoccus denitrificans (strain Pd 1222).